The chain runs to 298 residues: Probable endonuclease 4 (298 aa).

Residues histidine 69, histidine 111, glutamate 146, aspartate 180, histidine 183, histidine 215, aspartate 228, histidine 230, and glutamate 260 each contribute to the Zn(2+) site.

It belongs to the AP endonuclease 2 family. The cofactor is Zn(2+).

It carries out the reaction Endonucleolytic cleavage to 5'-phosphooligonucleotide end-products.. Endonuclease IV plays a role in DNA repair. It cleaves phosphodiester bonds at apurinic or apyrimidinic (AP) sites, generating a 3'-hydroxyl group and a 5'-terminal sugar phosphate. The chain is Probable endonuclease 4 from Bacillus cereus (strain 03BB102).